Here is a 92-residue protein sequence, read N- to C-terminus: Late cornified envelope protein 3E (92 aa).

The segment covering Met-1–Cys-10 has biased composition (low complexity). 2 disordered regions span residues Met-1–Pro-22 and Arg-64–Cys-92. The segment covering Gln-11–Pro-22 has biased composition (pro residues). Gly residues predominate over residues Gly-76–Cys-92.

Belongs to the LCE family. As to quaternary structure, interacts with CYSRT1. Skin-specific. Expression was readily detected in adult trunk skin, adult arm skin, fetal skin, penal skin, vulva, esophagus and tongue. Not expressed in the cervix, rectum, lung, colon, or placenta.

Functionally, precursors of the cornified envelope of the stratum corneum. This is Late cornified envelope protein 3E (LCE3E) from Homo sapiens (Human).